A 378-amino-acid polypeptide reads, in one-letter code: Chorismate synthase (378 aa).

Residue Arg-50 coordinates NADP(+). FMN contacts are provided by residues 127 to 129, 255 to 256, Gly-300, 315 to 319, and Arg-342; these read RAS, NA, and KPTPS.

This sequence belongs to the chorismate synthase family. It depends on FMNH2 as a cofactor.

The enzyme catalyses 5-O-(1-carboxyvinyl)-3-phosphoshikimate = chorismate + phosphate. It participates in metabolic intermediate biosynthesis; chorismate biosynthesis; chorismate from D-erythrose 4-phosphate and phosphoenolpyruvate: step 7/7. Catalyzes the anti-1,4-elimination of the C-3 phosphate and the C-6 proR hydrogen from 5-enolpyruvylshikimate-3-phosphate (EPSP) to yield chorismate, which is the branch point compound that serves as the starting substrate for the three terminal pathways of aromatic amino acid biosynthesis. This reaction introduces a second double bond into the aromatic ring system. This Methanocaldococcus jannaschii (strain ATCC 43067 / DSM 2661 / JAL-1 / JCM 10045 / NBRC 100440) (Methanococcus jannaschii) protein is Chorismate synthase.